We begin with the raw amino-acid sequence, 251 residues long: DNA repair protein RecO (251 aa).

Belongs to the RecO family.

Functionally, involved in DNA repair and RecF pathway recombination. This chain is DNA repair protein RecO, found in Acetivibrio thermocellus (strain ATCC 27405 / DSM 1237 / JCM 9322 / NBRC 103400 / NCIMB 10682 / NRRL B-4536 / VPI 7372) (Clostridium thermocellum).